The chain runs to 62 residues: Sucrase-isomaltase, intestinal (62 aa).

Residues 2 to 12 lie on the Cytoplasmic side of the membrane; it reads ARKKFSGLEIX. Ser-7 bears the Phosphoserine; by PKA mark. Residues 13–32 form a helical; Signal-anchor for type II membrane protein membrane-spanning segment; it reads LIVLFAIVLSIAIALVVVXA. Residues 33–38 are Lumenal-facing; it reads SKXPAV. Position 59 is a sulfotyrosine (Tyr-59).

Belongs to the glycosyl hydrolase 31 family. As to quaternary structure, the resulting sucrase and isomaltase subunits stay associated with one another in a complex by non-covalent linkages. In terms of processing, the precursor is proteolytically cleaved when exposed to pancreatic proteases in the intestinal lumen. Sulfated.

The protein localises to the apical cell membrane. It carries out the reaction Hydrolysis of sucrose and maltose by an alpha-D-glucosidase-type action.. The catalysed reaction is Hydrolysis of (1-&gt;6)-alpha-D-glucosidic linkages in some oligosaccharides produced from starch and glycogen by alpha-amylase, and in isomaltose.. Its function is as follows. Plays an important role in the final stage of carbohydrate digestion. Isomaltase activity is specific for both alpha-1,4- and alpha-1,6-oligosaccharides. This Sus scrofa (Pig) protein is Sucrase-isomaltase, intestinal (SI).